Here is a 94-residue protein sequence, read N- to C-terminus: Pyrimidine/purine nucleoside phosphorylase (94 aa).

It belongs to the nucleoside phosphorylase PpnP family.

The catalysed reaction is a purine D-ribonucleoside + phosphate = a purine nucleobase + alpha-D-ribose 1-phosphate. It catalyses the reaction adenosine + phosphate = alpha-D-ribose 1-phosphate + adenine. The enzyme catalyses cytidine + phosphate = cytosine + alpha-D-ribose 1-phosphate. It carries out the reaction guanosine + phosphate = alpha-D-ribose 1-phosphate + guanine. The catalysed reaction is inosine + phosphate = alpha-D-ribose 1-phosphate + hypoxanthine. It catalyses the reaction thymidine + phosphate = 2-deoxy-alpha-D-ribose 1-phosphate + thymine. The enzyme catalyses uridine + phosphate = alpha-D-ribose 1-phosphate + uracil. It carries out the reaction xanthosine + phosphate = alpha-D-ribose 1-phosphate + xanthine. Its function is as follows. Catalyzes the phosphorolysis of diverse nucleosides, yielding D-ribose 1-phosphate and the respective free bases. Can use uridine, adenosine, guanosine, cytidine, thymidine, inosine and xanthosine as substrates. Also catalyzes the reverse reactions. This chain is Pyrimidine/purine nucleoside phosphorylase, found in Aeromonas hydrophila subsp. hydrophila (strain ATCC 7966 / DSM 30187 / BCRC 13018 / CCUG 14551 / JCM 1027 / KCTC 2358 / NCIMB 9240 / NCTC 8049).